The sequence spans 468 residues: Pancreatic lipase-related protein 2 (468 aa).

Residues 1–16 (MLLCWIVSLLLATVGG) form the signal peptide. Residues cysteine 20 and cysteine 26 are joined by a disulfide bond. Residues 92–104 (VHGFIDKGEDGWL) form a required for galactolipase activity region. Cysteine 108 and cysteine 119 are disulfide-bonded. Serine 170 acts as the Nucleophile in catalysis. Aspartate 194 (charge relay system) is an active-site residue. Residues glutamate 205, arginine 208, aspartate 210, and aspartate 213 each coordinate Ca(2+). An intrachain disulfide couples cysteine 255 to cysteine 279. The interval 256–278 (QKNILSTIVDINGIWEGTQNFVA) is required for galactolipase activity. Catalysis depends on histidine 281, which acts as the Charge relay system. 2 cysteine pairs are disulfide-bonded: cysteine 303-cysteine 314 and cysteine 317-cysteine 322. Residues asparagine 352 and asparagine 427 are each glycosylated (N-linked (GlcNAc...) asparagine). The 113-residue stretch at 356–468 (WRYKVSVTLS…EDVLQSLYPC (113 aa)) folds into the PLAT domain. Cysteine 452 and cysteine 468 are disulfide-bonded.

It belongs to the AB hydrolase superfamily. Lipase family. In terms of tissue distribution, expressed in pancreatic acinar cells (at protein level).

It localises to the secreted. The protein resides in the zymogen granule membrane. The protein localises to the cell projection. Its subcellular location is the neuron projection. It carries out the reaction a triacylglycerol + H2O = a diacylglycerol + a fatty acid + H(+). It catalyses the reaction a 1,2-diacyl-3-O-(beta-D-galactosyl)-sn-glycerol + 2 H2O = 3-beta-D-galactosyl-sn-glycerol + 2 a fatty acid + 2 H(+). The catalysed reaction is 1,2,3-tri-(9Z-octadecenoyl)-glycerol + H2O = di-(9Z)-octadecenoylglycerol + (9Z)-octadecenoate + H(+). The enzyme catalyses di-(9Z)-octadecenoylglycerol + H2O = (9Z-octadecenoyl)-glycerol + (9Z)-octadecenoate + H(+). It carries out the reaction (9Z-octadecenoyl)-glycerol + H2O = glycerol + (9Z)-octadecenoate + H(+). It catalyses the reaction 1-(9Z-octadecenoyl)-glycerol + H2O = glycerol + (9Z)-octadecenoate + H(+). The catalysed reaction is 1,2,3-tripropanoylglycerol + H2O = dipropanoylglycerol + propanoate + H(+). The enzyme catalyses 1,2,3-tributanoylglycerol + H2O = dibutanoylglycerol + butanoate + H(+). It carries out the reaction 1,2,3-trioctanoylglycerol + H2O = dioctanoylglycerol + octanoate + H(+). It catalyses the reaction 1,2-didecanoylglycerol + H2O = decanoylglycerol + decanoate + H(+). The catalysed reaction is long chain 1,2-diacyl-3-O-beta-D-galactosyl-sn-glycerol + H2O = long chain acyl-3-O-beta-D-galactosyl-sn-glycerol + a fatty acid + H(+). The enzyme catalyses 1,2-dioctanoyl-3-O-beta-D-galactosyl-sn-glycerol + H2O = octanoyl-3-(beta-D-galactosyl)-sn-glycerol + octanoate + H(+). It carries out the reaction 1,2-didodecanoyl-3-beta-D-galactosyl-sn-glycerol + H2O = dodecanoyl-3-beta-D-galactosyl-sn-glycerol + dodecanoate + H(+). It catalyses the reaction 1-beta-D-galactosyl-2,3-didodecanoyl-sn-glycerol + H2O = 1-beta-D-galactosyl-dodecanoyl-sn-glycerol + dodecanoate + H(+). The catalysed reaction is a 1,2-diacyl-3-O-[alpha-D-galactosyl-(1-&gt;6)-beta-D-galactosyl]-sn-glycerol + H2O = acyl-3-O-[alpha-D-galactosyl-(1-&gt;6)-beta-D-galactosyl]-sn-glycerol + a fatty acid + H(+). The enzyme catalyses long chain 1,2-diacyl-3-O-[alpha-D-galactosyl-(1-&gt;6)-beta-D-galactosyl]-sn-glycerol + H2O = long chain acyl-3-O-[alpha-D-galactosyl-(1-&gt;6)-beta-D-galactosyl]-sn-glycerol + a fatty acid + H(+). It carries out the reaction 1,2-dioctanoyl-3-O-[alpha-D-galactosyl-(1-&gt;6)-beta-D-galactosyl]-sn-glycerol + H2O = octanoyl-3-O-[alpha-D-galactosyl-(1-&gt;6)-beta-D-galactosyl]-sn-glycerol + octanoate + H(+). It catalyses the reaction 1,2-didodecanoyl-3-O-[alpha-D-galactosyl-(1-&gt;6)-beta-D-galactosyl]-sn-glycerol + H2O = dodecanoyl-3-O-[alpha-D-galactosyl-(1-&gt;6)-beta-D-galactosyl]-sn-glycerol + dodecanoate + H(+). The catalysed reaction is a 1,2-diacyl-sn-glycero-3-phosphocholine + H2O = a monoacyl-sn-glycero-3-phosphocholine + a fatty acid + H(+). It participates in glycerolipid metabolism; triacylglycerol degradation. It functions in the pathway glycolipid metabolism. With respect to regulation, CLPS stimulates triacylglycerol lipase activity. Triacylglycerol lipase activity is not inhibited by increasing bile salt concentration. Functionally, lipase that primarily hydrolyzes triglycerides and galactosylglycerides. In neonates, may play a major role in pancreatic digestion of dietary fats such as milk fat globules enriched in long-chain triglycerides. Hydrolyzes short-, medium- and long-chain fatty acyls in triglycerides without apparent positional specificity. Can completely deacylate triacylglycerols. When the liver matures and bile salt synthesis increases, likely functions mainly as a galactolipase and monoacylglycerol lipase. Hydrolyzes monogalactosyldiglycerols (MGDG) and digalactosyldiacylglycerols (DGDG) present in a plant-based diet, releasing long-chain polyunsaturated fatty acids. Hydrolyzes medium- and long-chain fatty acyls in galactolipids. May act together with LIPF to hydrolyze partially digested triglycerides. Hydrolyzes long-chain monoglycerides with high efficiency. In cytotoxic T cells, contributes to perforin-dependent cell lysis, but is unlikely to mediate direct cytotoxicity. Also has low phospholipase activity. In neurons, required for the localization of the phospholipid 1-oleoyl-2-palmitoyl-PC (OPPC) to neurite tips through acyl chain remodeling of membrane phospholipids. The resulting OPPC-rich lipid membrane domain recruits the t-SNARE protein STX4 by selectively interacting with the STX4 transmembrane domain and this promotes surface expression of the dopamine transporter SLC6A3/DAT at neurite tips by facilitating fusion of SLC6A3-containing transport vesicles with the plasma membrane. This Rattus norvegicus (Rat) protein is Pancreatic lipase-related protein 2.